We begin with the raw amino-acid sequence, 1755 residues long: MHSLFRKRNKGKYSPTVQTRSISNKELSDLIEQLQKNADQVERNIVDTEAKMQSDLARMQEGQLPEHRDAALQNVSDSEKLLYVLEADSAIAKHMKHPQGDMIAEDIRQLKERVTNLRGKHKQMYSLAVKEADPRVNWDTLVDEKLDKLSSQSFGTDLPLVDSQVEQHNIFHNEVKAIGPHLAKDKEQNSELQAKYQKLLTASQARQQHLSSLQDYMQRCTNELYWLDQQAKGRMQYDWSDRNLDYPSRRRQYENFINRNLEAKEERINKLHTEGDQLLTAEHPGRNSIEAHMEAVHAEWKEYLNLLICEESHLKYMEDYHQFHKDMKDAQELLRKVDSDLNQKYSPDFKDRYQIELLLRELDDQEKALDKYEDVVRGLQRRGQQVVPLKYRRETPLKPIPVEALCDFESDQGLISRGYSYTLQKNNGESWELTDSTGKKLAAPAVCFIIPPTDPEALALADSLGSQYRSVRQKATGSKHALQQRHEVLRTENPGDASDLQGRQLLAGLDKVASDLDRQEKAITGILRPPLEQGRAIEDSAERAKGLKNITNELLQIEPEKTQCTAECEAFVQALPASGTAPLLKTRVEDTNQKYERLVWLLEAAQEKVDVANRLENSLQRGRELLASYENRLIQDDTMPESGHVLDRKRQELEAMASELQAHKSLLGEVGKNLQVAKQCSSSLASRFQEHCPDLERQEAEVHKLNQRFNNLSQQVERRAQSLQSARAAYDEYCSGYNRVLQFLAKTPSYEPQETDSLGQMETKLKNQKNLLDELASREQEVQKVYADSQQYQQAVKDYELEAEKLRSLLDLENGRNSHVNKRARLQSPAAKVKEEEAALAAKFTEVNAINRQRLQNLEFALNLLRQQPEAGVTHETLQGGKLSSGMEETWKIKKELEEEIERRQQLENEVKSAQEEIQTLKDQGPQESLVRKEVLKKVPDPALEESFQQLQQTLAEEQHKNQLLQEELGALQLRLQALEQETRDGGQEYVVKEVLRIEPDRAQEDEVLQLREELEALRRQKGAREAEVLLLQQRVAALAAEKSRVQEKVTEREVVKLQNDPQLEAEYRRLQEEHQREGTLREKQEEELSFLQAKLRRLEKERAMAEGKITVKEVLKVEKDAAVEREVNDLTRQYEDEAAKARSGQREKTELLRKIWALEEENAKVVVQEKVREIVRPDPKAESEVANLRLELVEQERKFRGAEEQLKSYQSELEALRNRGPQVEVKEVTKEVIKYTTDPETEQELQRLREEIMDKTRLIERCDLEIYQLKQEIQALKDTKPQVQTREVVQEILQFQEDPQTKKEVESLRIQLSEEQKKQVDLEGERASQEEKIKRKEEELAQQRKERVVRQEVVQYEDEPDLRAEVTAFTNSIDAELRQIDKLHVELRRLQHRRAELERQLEELERERQARRAAELEVQRLQQRLAALEQEEAKTGEKVTHTQKVVLQQDPQQTREHALLRAQLEEERHRRQLLEGELEPLRRKLAALEKAEIKEKVVFSESVQVEKGDTEQEIQRLKKSLEEESQSKRELDSEVTRLEAKLSELEFYNSKSSKELDFLREENHKLQLERQNLQLETRRLQSEIEMAATETRDLKNITTIDSGTHLNSRLWSLEKELDDLKKMSKDKDLEIDELQRRLGSVAVKREQRENHLRRSIVVIDPDTGRELSPEEAHRAGLIDWKMFVKLRSQECDWEEISVKGPNGESSVIHDRKSGKKFSIEDALQSGRLTAAQYDRYVNKDMSIQELAVLVSGQK.

Positions 1–11 (MHSLFRKRNKG) are enriched in basic residues. Residues 1 to 20 (MHSLFRKRNKGKYSPTVQTR) are disordered. Phosphoserine is present on Ser-14. 2 coiled-coil regions span residues 16–125 (TVQT…KQMY) and 182–387 (LAKD…QQVV). Spectrin repeat units lie at residues 214–315 (QDYM…SHLK), 321–483 (HQFH…HALQ), and 503–610 (RQLL…EKVD). Residues 397–453 (LKPIPVEALCDFESDQGLISRGYSYTLQKNNGESWELTDSTGKKLAAPAVCFIIPPT) form the SH3 domain. Ser-463 bears the Phosphoserine mark. 2 coiled-coil regions span residues 611 to 819 (VANR…RNSH) and 883 to 1644 (LSSG…SVAV). Ser-885, Ser-947, Ser-1583, and Ser-1656 each carry phosphoserine. The interval 1556-1755 (ELDFLREENH…ELAVLVSGQK (200 aa)) is interacts with BFSP2 and VIM. Plectin repeat units lie at residues 1650-1684 (ENHL…WKMF) and 1699-1734 (VKGP…AAQY).

This sequence belongs to the plakin or cytolinker family. Homodimer or a heterodimer with EVPL. Found in a complex composed of PPL (via C-terminal linker domain), BFSP1 and BFSP2 in the retinal lens. Within the complex interacts (via C-terminal linker domain) with BFSP2. Interacts with VIM. Binds to the PH domain of AKT1. Interacts with FCGR1A. May interact with PPHLN1. Expressed in the retinal lens (at protein level).

The protein resides in the cell junction. Its subcellular location is the desmosome. The protein localises to the cytoplasm. It localises to the cytoskeleton. It is found in the cell membrane. Functionally, component of the cornified envelope of keratinocytes. May link the cornified envelope to desmosomes and intermediate filaments. May act as a localization signal in PKB/AKT-mediated signaling. This is Periplakin (Ppl) from Mus musculus (Mouse).